The primary structure comprises 971 residues: Exportin-2 (971 aa).

Methionine 1 is modified (N-acetylmethionine). An Importin N-terminal domain is found at 29-102 (AEKFLESVEG…KANIVHLMLS (74 aa)). Serine 112 is subject to Phosphoserine. N6-acetyllysine occurs at positions 574 and 824. Phosphoserine is present on serine 931.

The protein belongs to the XPO2/CSE1 family. As to quaternary structure, found in a complex with CSE1L/XPO2, Ran and KPNA2. Binds with high affinity to importin-alpha only in the presence of RanGTP. The complex is dissociated by the combined action of RanBP1 and RanGAP1. Interacts with CFTR.

Its subcellular location is the cytoplasm. It localises to the nucleus. In terms of biological role, export receptor for importin-alpha. Mediates importin-alpha re-export from the nucleus to the cytoplasm after import substrates (cargos) have been released into the nucleoplasm. In the nucleus binds cooperatively to importin-alpha and to the GTPase Ran in its active GTP-bound form. Docking of this trimeric complex to the nuclear pore complex (NPC) is mediated through binding to nucleoporins. Upon transit of a nuclear export complex into the cytoplasm, disassembling of the complex and hydrolysis of Ran-GTP to Ran-GDP (induced by RANBP1 and RANGAP1, respectively) cause release of the importin-alpha from the export receptor. CSE1L/XPO2 then return to the nuclear compartment and mediate another round of transport. The directionality of nuclear export is thought to be conferred by an asymmetric distribution of the GTP- and GDP-bound forms of Ran between the cytoplasm and nucleus. The sequence is that of Exportin-2 (CSE1L) from Bos taurus (Bovine).